Here is a 122-residue protein sequence, read N- to C-terminus: Large ribosomal subunit protein uL14 (122 aa).

The protein belongs to the universal ribosomal protein uL14 family. As to quaternary structure, part of the 50S ribosomal subunit. Forms a cluster with proteins L3 and L19. In the 70S ribosome, L14 and L19 interact and together make contacts with the 16S rRNA in bridges B5 and B8.

Binds to 23S rRNA. Forms part of two intersubunit bridges in the 70S ribosome. The polypeptide is Large ribosomal subunit protein uL14 (Renibacterium salmoninarum (strain ATCC 33209 / DSM 20767 / JCM 11484 / NBRC 15589 / NCIMB 2235)).